The following is a 251-amino-acid chain: Probable transcriptional regulatory protein PMI1113 (251 aa).

The protein belongs to the TACO1 family.

Its subcellular location is the cytoplasm. This is Probable transcriptional regulatory protein PMI1113 from Proteus mirabilis (strain HI4320).